The primary structure comprises 227 residues: Cytochrome c oxidase subunit 2 (227 aa).

Residues 1-14 (MAYPFQLGFQDATS) lie on the Mitochondrial intermembrane side of the membrane. Residues 15–45 (PIMEELLHFHDHTLMIVFLISSLVLYIISLM) traverse the membrane as a helical segment. Over 46–59 (LTTKLTHTSTMDAQ) the chain is Mitochondrial matrix. A helical membrane pass occupies residues 60–87 (EVETIWTILPAIILILIALPSLRILYMM). The Mitochondrial intermembrane segment spans residues 88 to 227 (DEINNPSLTV…HFEKWSASML (140 aa)). Cu cation-binding residues include His161, Cys196, Glu198, Cys200, His204, and Met207. Glu198 is a binding site for Mg(2+).

The protein belongs to the cytochrome c oxidase subunit 2 family. As to quaternary structure, component of the cytochrome c oxidase (complex IV, CIV), a multisubunit enzyme composed of 14 subunits. The complex is composed of a catalytic core of 3 subunits MT-CO1, MT-CO2 and MT-CO3, encoded in the mitochondrial DNA, and 11 supernumerary subunits COX4I, COX5A, COX5B, COX6A, COX6B, COX6C, COX7A, COX7B, COX7C, COX8 and NDUFA4, which are encoded in the nuclear genome. The complex exists as a monomer or a dimer and forms supercomplexes (SCs) in the inner mitochondrial membrane with NADH-ubiquinone oxidoreductase (complex I, CI) and ubiquinol-cytochrome c oxidoreductase (cytochrome b-c1 complex, complex III, CIII), resulting in different assemblies (supercomplex SCI(1)III(2)IV(1) and megacomplex MCI(2)III(2)IV(2)). Found in a complex with TMEM177, COA6, COX18, COX20, SCO1 and SCO2. Interacts with TMEM177 in a COX20-dependent manner. Interacts with COX20. Interacts with COX16. Requires Cu cation as cofactor.

The protein resides in the mitochondrion inner membrane. It catalyses the reaction 4 Fe(II)-[cytochrome c] + O2 + 8 H(+)(in) = 4 Fe(III)-[cytochrome c] + 2 H2O + 4 H(+)(out). Component of the cytochrome c oxidase, the last enzyme in the mitochondrial electron transport chain which drives oxidative phosphorylation. The respiratory chain contains 3 multisubunit complexes succinate dehydrogenase (complex II, CII), ubiquinol-cytochrome c oxidoreductase (cytochrome b-c1 complex, complex III, CIII) and cytochrome c oxidase (complex IV, CIV), that cooperate to transfer electrons derived from NADH and succinate to molecular oxygen, creating an electrochemical gradient over the inner membrane that drives transmembrane transport and the ATP synthase. Cytochrome c oxidase is the component of the respiratory chain that catalyzes the reduction of oxygen to water. Electrons originating from reduced cytochrome c in the intermembrane space (IMS) are transferred via the dinuclear copper A center (CU(A)) of subunit 2 and heme A of subunit 1 to the active site in subunit 1, a binuclear center (BNC) formed by heme A3 and copper B (CU(B)). The BNC reduces molecular oxygen to 2 water molecules using 4 electrons from cytochrome c in the IMS and 4 protons from the mitochondrial matrix. The protein is Cytochrome c oxidase subunit 2 (MT-CO2) of Ceratotherium simum (White rhinoceros).